We begin with the raw amino-acid sequence, 1067 residues long: Dorsal-ventral patterning protein tolloid (1067 aa).

The first 36 residues, 1–36 (MKGMRLMPMKMKAKLVVLSVGALWMMMFFLVDYAEG), serve as a signal peptide directing secretion. A propeptide spanning residues 37–136 (RRLSQLPESE…NGQPIQRRRR (100 aa)) is cleaved from the precursor. The Peptidase M12A domain maps to 136–338 (RAVTVRKERT…VQANLLYKCA (203 aa)). Asn176 carries N-linked (GlcNAc...) asparagine glycosylation. Intrachain disulfides connect Cys179–Cys337, Cys201–Cys223, Cys203–Cys204, Cys340–Cys390, and Cys417–Cys439. Zn(2+) is bound at residue His231. Glu232 is a catalytic residue. Positions 235 and 241 each coordinate Zn(2+). 2 consecutive short sequence motifs (cell attachment site) follow at residues 245-247 (RGD) and 325-327 (RGD). 2 consecutive CUB domains span residues 340–477 (CGRT…FEVV) and 478–591 (CGGD…LMLD). Asn441 carries N-linked (GlcNAc...) asparagine glycosylation. 6 disulfides stabilise this stretch: Cys478–Cys505, Cys532–Cys554, Cys595–Cys606, Cys602–Cys615, Cys617–Cys630, and Cys634–Cys662. Asn543 carries N-linked (GlcNAc...) asparagine glycosylation. The EGF-like 1; calcium-binding domain occupies 591–631 (DVDECKFTDHGCQHLCINTLGSYQCGCRAGYELQANGKTCE). One can recognise a CUB 3 domain in the interval 634 to 753 (CGGVVDATKS…SGFVAKFVID (120 aa)). N-linked (GlcNAc...) asparagine glycans are attached at residues Asn644 and Asn677. 8 disulfide bridges follow: Cys693–Cys716, Cys757–Cys768, Cys764–Cys777, Cys779–Cys792, Cys797–Cys823, Cys850–Cys872, Cys910–Cys940, and Cys967–Cys989. One can recognise an EGF-like 2; calcium-binding domain in the interval 753-793 (DVDECSMNNGGCQHRCRNTFGSYQCSCRNGYTLAENGHNCT). Asn791 is a glycosylation site (N-linked (GlcNAc...) asparagine). 2 CUB domains span residues 797-909 (CKFE…FVSE) and 910-1026 (CGGY…FMAV). Residues Asn864 and Asn918 are each glycosylated (N-linked (GlcNAc...) asparagine).

Zn(2+) is required as a cofactor.

Metalloprotease which cleaves TGF-beta family ligands daw, Actbeta and myo in vitro. Cleavage of daw enhances its signaling activity. Cleaves dorsal-ventral patterning protein sog. Processes sog more efficiently than metalloprotease tld which also cleaves sog. Required for normal dorsal development. TLD may interact physically with DPP-C protein. This chain is Dorsal-ventral patterning protein tolloid (tld), found in Drosophila melanogaster (Fruit fly).